The primary structure comprises 556 residues: Potassium-transporting ATPase potassium-binding subunit (556 aa).

A run of 12 helical transmembrane segments spans residues 3–23 (AHGV…TPIL), 57–77 (AAYA…LYAL), 129–149 (GLTV…VALM), 172–192 (LGLL…QGVP), 247–267 (LVNL…TNTF), 278–298 (WALL…AWWA), 319–339 (LGVA…CGAV), 346–366 (LLPL…VVVG), 371–391 (GLYG…LMVG), 408–428 (LAVI…GLAI), 486–506 (FVVM…MAVP), and 516–536 (GWLF…LTYF).

This sequence belongs to the KdpA family. In terms of assembly, the system is composed of three essential subunits: KdpA, KdpB and KdpC.

It is found in the cell inner membrane. Its function is as follows. Part of the high-affinity ATP-driven potassium transport (or Kdp) system, which catalyzes the hydrolysis of ATP coupled with the electrogenic transport of potassium into the cytoplasm. This subunit binds the periplasmic potassium ions and delivers the ions to the membrane domain of KdpB through an intramembrane tunnel. This Paramagnetospirillum magneticum (strain ATCC 700264 / AMB-1) (Magnetospirillum magneticum) protein is Potassium-transporting ATPase potassium-binding subunit.